Reading from the N-terminus, the 444-residue chain is E3 ubiquitin-protein ligase RNFT2 (444 aa).

Residues 1-181 (MWLFTVNQVL…ILLAKLCFQH (181 aa)) lie on the Extracellular side of the membrane. Disordered stretches follow at residues 13–41 (MQRR…ASVD) and 92–149 (PASR…PGTP). Residues 107–121 (YHHRQPHHHFHHGGH) are compositionally biased toward basic residues. Over residues 131–140 (GGDHRGHSEE) the composition is skewed to basic and acidic residues. The helical transmembrane segment at 182-202 (KLGIAVCIGMASTFAYANSTL) threads the bilayer. Residues 203 to 214 (REQVSLKEKRSV) lie on the Cytoplasmic side of the membrane. The helical transmembrane segment at 215–235 (LVILWILAFLAGNTLYVLYTF) threads the bilayer. The Extracellular portion of the chain corresponds to 236-255 (SSQQLYNSLIFLKPNLEMLD). The chain crosses the membrane as a helical span at residues 256–276 (FFDLLWIVGIADFVLKYITIA). The Cytoplasmic portion of the chain corresponds to 277 to 329 (LKCLIVALPKIILAVKSKGKFYLVIEELSQLFRSLVPIQLWYKYIMGDDSSNS). A helical membrane pass occupies residues 330–350 (YFLGGVLIVLYSLCKSFDICG). Topologically, residues 351–444 (RVGGVRKALK…GATSAHFQVY (94 aa)) are extracellular. An RING-type zinc finger spans residues 384-422 (CAICQAEFREPLILLCQHVFCEECLCLWLDRERTCPLCR).

The protein localises to the membrane. Its function is as follows. E3 ubiquitin-protein ligase that negatively regulates IL3-dependent cellular responses through IL3RA ubiquitination and degradation by the proteasome, having an anti-inflammatory effect. This Homo sapiens (Human) protein is E3 ubiquitin-protein ligase RNFT2.